Consider the following 435-residue polypeptide: Dual specificity mitogen-activated protein kinase kinase jkk-1 (435 aa).

Basic and acidic residues predominate over residues 35-49 (RDRRSTSVDQKHKEC). The interval 35-90 (RDRRSTSVDQKHKECSSTSSSPQHQRPNNIGYLTSPMERKFTPLSMKPSPSRRDTE) is disordered. The span at 50-66 (SSTSSSPQHQRPNNIGY) shows a compositional bias: polar residues. One can recognise a Protein kinase domain in the interval 122 to 385 (IHIISLLGSG…YRQLMKHDFY (264 aa)). ATP-binding positions include 128-136 (LGSGSCGVV) and Lys149. Asp246 serves as the catalytic Proton acceptor.

Belongs to the protein kinase superfamily. STE Ser/Thr protein kinase family. MAP kinase kinase subfamily. As to quaternary structure, interacts with unc-16. Mg(2+) is required as a cofactor. As to expression, expressed in most neurons, including nerve ring, head ganglions, dorsal and ventral nerve cords and tail ganglions.

Its subcellular location is the cytoplasm. It localises to the perikaryon. The protein localises to the cell projection. The protein resides in the axon. The catalysed reaction is L-seryl-[protein] + ATP = O-phospho-L-seryl-[protein] + ADP + H(+). It carries out the reaction L-threonyl-[protein] + ATP = O-phospho-L-threonyl-[protein] + ADP + H(+). The enzyme catalyses L-tyrosyl-[protein] + ATP = O-phospho-L-tyrosyl-[protein] + ADP + H(+). In terms of biological role, dual specificity protein kinase which acts as an essential component of the JNK signal transduction pathway. May phosphorylate jnk-1. Plays a role in coordinating locomotion via D-type GABAergic motoneurons and in regulating synaptic vesicle transport downstream of adapter protein unc-16 and probably by activating jnk-1. Positively regulates lifespan. Upon environmental stress such as heat stress regulates daf-16 nuclear translocation probably by activating jnk-1. Regulates germline cell apoptosis in response to heavy metals such as Cu(2+) and to arsenite. In Caenorhabditis elegans, this protein is Dual specificity mitogen-activated protein kinase kinase jkk-1.